Here is a 307-residue protein sequence, read N- to C-terminus: Small ribosomal subunit biogenesis GTPase RsgA (307 aa).

The CP-type G domain maps to 64–229 (KNSLIRPSIA…IADTPGFSSL (166 aa)). GTP-binding positions include 113–116 (SKLD) and 172–180 (GQTGAGKTT). Zn(2+) contacts are provided by cysteine 253, cysteine 258, histidine 260, and cysteine 266.

Belongs to the TRAFAC class YlqF/YawG GTPase family. RsgA subfamily. As to quaternary structure, monomer. Associates with 30S ribosomal subunit, binds 16S rRNA. It depends on Zn(2+) as a cofactor.

The protein localises to the cytoplasm. In terms of biological role, one of several proteins that assist in the late maturation steps of the functional core of the 30S ribosomal subunit. Helps release RbfA from mature subunits. May play a role in the assembly of ribosomal proteins into the subunit. Circularly permuted GTPase that catalyzes slow GTP hydrolysis, GTPase activity is stimulated by the 30S ribosomal subunit. The protein is Small ribosomal subunit biogenesis GTPase RsgA of Lactococcus lactis subsp. lactis (strain IL1403) (Streptococcus lactis).